Here is a 440-residue protein sequence, read N- to C-terminus: Xylose isomerase (440 aa).

Active-site residues include histidine 100 and aspartate 103. Mg(2+) contacts are provided by glutamate 231, glutamate 267, histidine 270, aspartate 295, aspartate 306, aspartate 308, and aspartate 338.

The protein belongs to the xylose isomerase family. Homotetramer. Mg(2+) serves as cofactor.

It is found in the cytoplasm. The catalysed reaction is alpha-D-xylose = alpha-D-xylulofuranose. This chain is Xylose isomerase, found in Paraburkholderia phytofirmans (strain DSM 17436 / LMG 22146 / PsJN) (Burkholderia phytofirmans).